Consider the following 351-residue polypeptide: D-alanine--D-alanine ligase (351 aa).

Residues 135 to 343 (NQIFLQSGQK…MEEVFSDLIE (209 aa)) enclose the ATP-grasp domain. ATP is bound at residue 167 to 222 (LETLGFPQFLKPVEGGSSVSVYKITNREQLKEKLALIFESDSKVMSQSFLTGIEVS). 3 residues coordinate Mg(2+): Asp298, Glu310, and Asn312.

This sequence belongs to the D-alanine--D-alanine ligase family. Requires Mg(2+) as cofactor. It depends on Mn(2+) as a cofactor.

It localises to the cytoplasm. The catalysed reaction is 2 D-alanine + ATP = D-alanyl-D-alanine + ADP + phosphate + H(+). It functions in the pathway cell wall biogenesis; peptidoglycan biosynthesis. Cell wall formation. This is D-alanine--D-alanine ligase from Leptospira interrogans serogroup Icterohaemorrhagiae serovar Lai (strain 56601).